The sequence spans 299 residues: Oxygen-dependent coproporphyrinogen-III oxidase (299 aa).

Ser-92 contacts substrate. Mn(2+)-binding residues include His-96 and His-106. His-106 (proton donor) is an active-site residue. 108–110 lines the substrate pocket; it reads NVR. The Mn(2+) site is built by His-145 and His-175. The interval 240–275 is important for dimerization; the sequence is YVEFNLVWDRGTLFGLQTGGRTESILMSMPPLVRWE. 258 to 260 contacts substrate; that stretch reads GGR.

The protein belongs to the aerobic coproporphyrinogen-III oxidase family. In terms of assembly, homodimer. Mn(2+) is required as a cofactor.

It is found in the cytoplasm. It carries out the reaction coproporphyrinogen III + O2 + 2 H(+) = protoporphyrinogen IX + 2 CO2 + 2 H2O. It functions in the pathway porphyrin-containing compound metabolism; protoporphyrin-IX biosynthesis; protoporphyrinogen-IX from coproporphyrinogen-III (O2 route): step 1/1. In terms of biological role, involved in the heme biosynthesis. Catalyzes the aerobic oxidative decarboxylation of propionate groups of rings A and B of coproporphyrinogen-III to yield the vinyl groups in protoporphyrinogen-IX. The chain is Oxygen-dependent coproporphyrinogen-III oxidase from Escherichia coli O7:K1 (strain IAI39 / ExPEC).